The following is a 320-amino-acid chain: MKANNTTTSALWLQITYITMEAAIGLCAVVGNMLVIWVVKLNRTLRTTTFYFIVSLALADIAVGVLVIPLAIAVSLEVQMHFYACLFMSCVLLVFTHASIMSLLAIAVDRYLRVKLTVRYRTVTTQRRIWLFLGLCWLVSFLVGLTPMFGWNRKVTLELSQNSSTLSCHFRSVVGLDYMVFFSFITWILIPLVVMCIIYLDIFYIIRNKLSQNLTGFRETRAFYGREFKTAKSLFLVLFLFALCWLPLSIINFVSYFNVKIPEIAMCLGILLSHANSMMNPIVYACKIKKFKETYFVILRACRLCQTSDSLDSNLEQTTE.

Residues 1–16 (MKANNTTTSALWLQIT) lie on the Extracellular side of the membrane. Asparagine 4 and asparagine 5 each carry an N-linked (GlcNAc...) asparagine glycan. The chain crosses the membrane as a helical span at residues 17 to 39 (YITMEAAIGLCAVVGNMLVIWVV). The Cytoplasmic segment spans residues 40-50 (KLNRTLRTTTF). A helical transmembrane segment spans residues 51 to 74 (YFIVSLALADIAVGVLVIPLAIAV). Residues 75-86 (SLEVQMHFYACL) lie on the Extracellular side of the membrane. Cysteine 85 and cysteine 168 are oxidised to a cystine. A helical transmembrane segment spans residues 87–108 (FMSCVLLVFTHASIMSLLAIAV). The Cytoplasmic segment spans residues 109 to 128 (DRYLRVKLTVRYRTVTTQRR). A helical transmembrane segment spans residues 129 to 150 (IWLFLGLCWLVSFLVGLTPMFG). Residues 151–179 (WNRKVTLELSQNSSTLSCHFRSVVGLDYM) are Extracellular-facing. Residues 180–200 (VFFSFITWILIPLVVMCIIYL) traverse the membrane as a helical segment. At 201 to 233 (DIFYIIRNKLSQNLTGFRETRAFYGREFKTAKS) the chain is on the cytoplasmic side. The helical transmembrane segment at 234–257 (LFLVLFLFALCWLPLSIINFVSYF) threads the bilayer. Over 258-263 (NVKIPE) the chain is Extracellular. Residues 264 to 286 (IAMCLGILLSHANSMMNPIVYAC) form a helical membrane-spanning segment. Residues 287 to 320 (KIKKFKETYFVILRACRLCQTSDSLDSNLEQTTE) are Cytoplasmic-facing. The S-palmitoyl cysteine moiety is linked to residue cysteine 305. Residues threonine 307, threonine 318, and threonine 319 each carry the phosphothreonine modification.

Belongs to the G-protein coupled receptor 1 family. Phosphorylation on Thr-318 and Thr-319 may be crucial for rapid desensitization. Phosphorylation on Thr-318 may be necessary for phosphorylation on Thr-319 to occur. Testis, particularly in spermatocytes and spermatids but not in spermatogonia. Low levels in the brain.

Its subcellular location is the cell membrane. Functionally, receptor for adenosine. The activity of this receptor is mediated by G proteins which inhibits adenylyl cyclase. May play a role during reproduction. This is Adenosine receptor A3 (Adora3) from Rattus norvegicus (Rat).